The chain runs to 214 residues: Small ribosomal subunit protein uS3c (214 aa).

One can recognise a KH type-2 domain in the interval 39–111; sequence IRTYLNKLAK…QITINVVEVE (73 aa).

It belongs to the universal ribosomal protein uS3 family. Part of the 30S ribosomal subunit.

It is found in the plastid. The protein resides in the chloroplast. The chain is Small ribosomal subunit protein uS3c (rps3) from Thalassiosira pseudonana (Marine diatom).